A 223-amino-acid polypeptide reads, in one-letter code: Ribose-5-phosphate isomerase A (223 aa).

Residues 28-31 (TGTT), 81-84 (DSAD), and 94-97 (KGGG) contribute to the substrate site. Glutamate 103 (proton acceptor) is an active-site residue. Lysine 121 serves as a coordination point for substrate.

It belongs to the ribose 5-phosphate isomerase family. In terms of assembly, homodimer.

It carries out the reaction aldehydo-D-ribose 5-phosphate = D-ribulose 5-phosphate. It participates in carbohydrate degradation; pentose phosphate pathway; D-ribose 5-phosphate from D-ribulose 5-phosphate (non-oxidative stage): step 1/1. Catalyzes the reversible conversion of ribose-5-phosphate to ribulose 5-phosphate. The polypeptide is Ribose-5-phosphate isomerase A (Buchnera aphidicola subsp. Acyrthosiphon pisum (strain 5A)).